Reading from the N-terminus, the 204-residue chain is Tat proofreading chaperone DmsD (204 aa).

It belongs to the TorD/DmsD family. DmsD subfamily.

Required for biogenesis/assembly of DMSO reductase, but not for the interaction of the DmsA signal peptide with the Tat system. May be part of a chaperone cascade complex that facilitates a folding-maturation pathway for the substrate protein. The polypeptide is Tat proofreading chaperone DmsD (Escherichia coli O157:H7).